A 72-amino-acid polypeptide reads, in one-letter code: Crustacean hyperglycemic hormone (72 aa).

A Pyrrolidone carboxylic acid modification is found at Gln1. Phe3 carries the D-phenylalanine; in form CHH-II modification. 3 disulfide bridges follow: Cys7–Cys43, Cys23–Cys39, and Cys26–Cys52. The residue at position 72 (Val72) is a Valine amide.

In terms of processing, stereoinversion of L-Phe (in CHH-I) to D-Phe (in CHH-II) the two forms are present in a ratio 3:1 (CHH-I/CHH-II). As to expression, produced by the medulla terminalis X-organ in the eyestalks and transported to the sinus gland where they are stored and released.

It localises to the secreted. In terms of biological role, hormone found in the sinus gland of isopods and decapods which controls the blood sugar level. Has a secretagogue action over the amylase released from the midgut gland. May act as a stress hormone and may be involved in the control of molting and reproduction. This chain is Crustacean hyperglycemic hormone, found in Procambarus bouvieri (Mexican crayfish).